We begin with the raw amino-acid sequence, 449 residues long: Heterogeneous nuclear ribonucleoprotein H (449 aa).

An N-acetylmethionine modification is found at M1. Position 2 is an N-acetylmethionine; in Heterogeneous nuclear ribonucleoprotein H, N-terminally processed (M2). Residues 11–90 (FVVKVRGLPW…RYVEVFKSNN (80 aa)) form the RRM 1 domain. S23 carries the post-translational modification Phosphoserine. Residue K35 forms a Glycyl lysine isopeptide (Lys-Gly) (interchain with G-Cter in SUMO2) linkage. S54 and S63 each carry phosphoserine. Glycyl lysine isopeptide (Lys-Gly) (interchain with G-Cter in SUMO2) cross-links involve residues K87 and K98. Positions 111-188 (GFVRLRGLPF…RYIEIFKSSR (78 aa)) constitute an RRM 2 domain. Position 233 is a dimethylated arginine; alternate (R233). Residue R233 is modified to Omega-N-methylarginine; alternate. The 1-1 repeat unit spans residues 234 to 249 (GAYGGGYGGYDDYNGY). A 2 X 16 AA Gly-rich approximate repeats region spans residues 234 to 433 (GAYGGGYGGY…YGGQSSMSGY (200 aa)). Residue Y246 is modified to Phosphotyrosine. One can recognise an RRM 3 domain in the interval 289 to 364 (HCVHMRGLPY…RYVELFLNST (76 aa)). S310 carries the post-translational modification Phosphoserine. 3 consecutive repeat copies span residues 354 to 372 (HRYVELFLNSTAGASGGAY), 374 to 392 (HRYVELFLNSTAGASGGAY), and 418 to 433 (GGYGGGYGGQSSMSGY). The 2 X 19 AA perfect repeats stretch occupies residues 354–392 (HRYVELFLNSTAGASGGAYEHRYVELFLNSTAGASGGAY).

Part of a ternary complex containing FUBP2, PTBP1, PTBP2 and HNRNPH1. Identified in the spliceosome C complex. Interacts with IGF2BP1. Interacts with CUGBP1; the interaction is RNA-dependent. Interacts with MBNL1; the interaction in RNA-independent.

It is found in the nucleus. It localises to the nucleoplasm. Functionally, this protein is a component of the heterogeneous nuclear ribonucleoprotein (hnRNP) complexes which provide the substrate for the processing events that pre-mRNAs undergo before becoming functional, translatable mRNAs in the cytoplasm. Mediates pre-mRNA alternative splicing regulation. Inhibits, together with CUGBP1, insulin receptor (IR) pre-mRNA exon 11 inclusion in myoblast. Binds to the IR RNA. Binds poly(RG). The protein is Heterogeneous nuclear ribonucleoprotein H (Hnrnph1) of Rattus norvegicus (Rat).